The primary structure comprises 481 residues: RAC-alpha serine/threonine-protein kinase (481 aa).

The PH domain maps to 5 to 108; sequence AIVKEGWLHK…WIQVIQHVAD (104 aa). Residues 120–141 form a disordered region; that stretch reads VRSGDSPSDNSGAEEMEVSHSK. O-linked (GlcNAc) serine glycans are attached at residues Ser-127 and Ser-130. The Protein kinase domain occupies 151 to 409; that stretch reads FEYLKLLGKG…AKEIMQHKFF (259 aa). Residues 157-165 and Lys-180 contribute to the ATP site; that span reads LGKGTFGKV. Asp-275 (proton acceptor) is an active-site residue. An O-linked (GlcNAc) threonine glycan is attached at Thr-306. Position 309 is a phosphothreonine; by PDPK1 (Thr-309). Thr-313 carries O-linked (GlcNAc) threonine glycosylation. The region spanning 410–481 is the AGC-kinase C-terminal domain; the sequence is AGIVWQDVYE…QFSYSASGNA (72 aa). A Phosphoserine modification is found at Ser-474. Ser-474 carries O-linked (GlcNAc) serine; alternate glycosylation. Tyr-475 is modified (phosphotyrosine).

It belongs to the protein kinase superfamily. AGC Ser/Thr protein kinase family. RAC subfamily. Post-translationally, cleavage by caspase-3/CASP3. Cleaved at the caspase-3 consensus site Asp-463 during apoptosis, resulting in down-regulation of the AKT signaling pathway and decreased cell survival. In terms of processing, phosphorylation on Thr-309 and Ser-474 is required for full activity. Phosphorylation of the activation loop at Thr-309 by PDPK1/PDK1 is a prerequisite for full activation. Phosphorylation by mTORC2 at Ser-474 in response to growth factors plays a key role in AKT1 activation by facilitating subsequent phosphorylation of the activation loop by PDPK1/PDK1. Expressed in the oocyte.

It localises to the cytoplasm. The protein localises to the nucleus. The catalysed reaction is L-seryl-[protein] + ATP = O-phospho-L-seryl-[protein] + ADP + H(+). It catalyses the reaction L-threonyl-[protein] + ATP = O-phospho-L-threonyl-[protein] + ADP + H(+). Its activity is regulated as follows. Activated in response to insulin. Three specific sites, one in the kinase domain (Thr-309) and the two other ones in the C-terminal regulatory region (Ser-474 and Tyr-475), need to be phosphorylated for its full activation. In terms of biological role, AKT1 is one of several closely related serine/threonine-protein kinases known as the AKT kinase, and which regulate many processes including metabolism, proliferation, cell survival, growth and angiogenesis. This is mediated through serine and/or threonine phosphorylation of a range of downstream substrates. Over 100 substrate candidates have been reported so far, but for most of them, no isoform specificity has been reported. Signals downstream of phosphatidylinositol 3-kinase (PI(3)K) to mediate the effects of various growth factors such as platelet-derived growth factor (PDGF), epidermal growth factor (EGF), insulin and insulin-like growth factor 1 (IGF1). Plays a role as a key modulator of the AKT-mTOR signaling pathway controlling the tempo of the process of newborn neurons integration during adult neurogenesis, including correct neuron positioning, dendritic development and synapse formation. Plays a role in glucose transport by mediating insulin-induced translocation of the GLUT4 glucose transporter to the cell surface. Mediates the antiapoptotic effects of IGF1. Mediates insulin-stimulated protein synthesis, partly by playing a role in both insulin-induced phosphorylation of 4E-BP1 and in insulin-induced activation of p70 S6 kinase. Promotes glycogen synthesis by mediating the insulin-induced activation of glycogen synthase. Required for insulin-stimulated meiotic reinitiation during oocyte maturation. May be involved in the regulation of vesicular functions such as preciliary trafficking and endocytic recycling. The sequence is that of RAC-alpha serine/threonine-protein kinase from Xenopus laevis (African clawed frog).